The sequence spans 334 residues: Holliday junction branch migration complex subunit RuvB (334 aa).

Residues 4 to 186 (ADRLIAPISN…FGIVQRLEYY (183 aa)) are large ATPase domain (RuvB-L). ATP-binding positions include isoleucine 25, arginine 26, glycine 67, lysine 70, threonine 71, threonine 72, 133 to 135 (EDY), arginine 176, tyrosine 186, and arginine 223. Residue threonine 71 participates in Mg(2+) binding. The segment at 187–257 (KVADLQHIVQ…TADRALNMLD (71 aa)) is small ATPAse domain (RuvB-S). Positions 260 to 334 (HQGFDYMDRK…RAYLHFGIEK (75 aa)) are head domain (RuvB-H). 2 residues coordinate DNA: arginine 315 and arginine 320.

It belongs to the RuvB family. In terms of assembly, homohexamer. Forms an RuvA(8)-RuvB(12)-Holliday junction (HJ) complex. HJ DNA is sandwiched between 2 RuvA tetramers; dsDNA enters through RuvA and exits via RuvB. An RuvB hexamer assembles on each DNA strand where it exits the tetramer. Each RuvB hexamer is contacted by two RuvA subunits (via domain III) on 2 adjacent RuvB subunits; this complex drives branch migration. In the full resolvosome a probable DNA-RuvA(4)-RuvB(12)-RuvC(2) complex forms which resolves the HJ.

The protein localises to the cytoplasm. The catalysed reaction is ATP + H2O = ADP + phosphate + H(+). Its function is as follows. The RuvA-RuvB-RuvC complex processes Holliday junction (HJ) DNA during genetic recombination and DNA repair, while the RuvA-RuvB complex plays an important role in the rescue of blocked DNA replication forks via replication fork reversal (RFR). RuvA specifically binds to HJ cruciform DNA, conferring on it an open structure. The RuvB hexamer acts as an ATP-dependent pump, pulling dsDNA into and through the RuvAB complex. RuvB forms 2 homohexamers on either side of HJ DNA bound by 1 or 2 RuvA tetramers; 4 subunits per hexamer contact DNA at a time. Coordinated motions by a converter formed by DNA-disengaged RuvB subunits stimulates ATP hydrolysis and nucleotide exchange. Immobilization of the converter enables RuvB to convert the ATP-contained energy into a lever motion, pulling 2 nucleotides of DNA out of the RuvA tetramer per ATP hydrolyzed, thus driving DNA branch migration. The RuvB motors rotate together with the DNA substrate, which together with the progressing nucleotide cycle form the mechanistic basis for DNA recombination by continuous HJ branch migration. Branch migration allows RuvC to scan DNA until it finds its consensus sequence, where it cleaves and resolves cruciform DNA. The sequence is that of Holliday junction branch migration complex subunit RuvB from Vibrio cholerae serotype O1 (strain ATCC 39541 / Classical Ogawa 395 / O395).